The sequence spans 379 residues: Glucose-1-phosphate adenylyltransferase (379 aa).

Residues Gly164, 179–180 (EK), and Ser190 contribute to the alpha-D-glucose 1-phosphate site.

It belongs to the bacterial/plant glucose-1-phosphate adenylyltransferase family. As to quaternary structure, homotetramer.

It catalyses the reaction alpha-D-glucose 1-phosphate + ATP + H(+) = ADP-alpha-D-glucose + diphosphate. The protein operates within glycan biosynthesis; glycogen biosynthesis. Its function is as follows. Involved in the biosynthesis of ADP-glucose, a building block required for the elongation reactions to produce glycogen. Catalyzes the reaction between ATP and alpha-D-glucose 1-phosphate (G1P) to produce pyrophosphate and ADP-Glc. This Streptococcus agalactiae serotype III (strain NEM316) protein is Glucose-1-phosphate adenylyltransferase.